A 733-amino-acid chain; its full sequence is MTRWSMSMHCTLFLLFLLRLTCIFSDSDYLMGLGSYDITGPAADVNMMGYANMEQVASGVHFRLRARAFIVAEPYKKRIAFVNLDAGMASQLVTIKVIERLKQRYGELYTEENVAISGTHTHAGPGGYLQYILYLVTSLGFVHQSFNALVDGIEQSIIQAHENLRPGSILINKGELLDAGVNRSPSAYLNNPAHERSKYEYDVDKEMTLVKFVDDQWGPVARIMEDWFERENGCRSVDVESPRRVSSIISDPYDQDLMEMASSLLSTGGKTVTRMSSVARRVRSRFRHADKPRFVSAFCQTNCGDVSPNVLGAFCIDTGLPCEFNQSTCGGKNEQCYGRGPGYPDEFESTRIIGERQFKKAADLFTKASEEIQGKVDYRHAYVDFSQLEVTINGQNGGSEVVKTCPAAMGFGFAAGTTDGPGAFDFKQGDDQGNPFWRLVRNLLKNPTEEQVRCQRPKPILLDTGEMKQPYDWAPSILPVQILRIGQLVILCVPGEFTTMAGRRLRDAVKTVLKEGSNGREFSVVIAGLTNSYSQYIATFEEYQVQRYEGASTLYGPHTLSGYIQEFKKLANDLLSAQTTDPGPQPPDLLHKQISLLTPVVADMTPIGTAFGDVTSDVPRLSKFRKGADIVRVQFRSANPRNDLMTEGTFALVERWLEGRETWVPVYDDDDFCLRFKWSRPFKLSTQSTATIEWRIPETASPGVYRITHFGSAKTPISSIHHFSGSSSAFVVY.

Residues 1-25 (MTRWSMSMHCTLFLLFLLRLTCIFS) form the signal peptide. The active-site Nucleophile is Ser307. The N-linked (GlcNAc...) asparagine glycan is linked to Asn325.

Belongs to the neutral ceramidase family.

It is found in the secreted. The protein localises to the endoplasmic reticulum. The protein resides in the golgi apparatus. It carries out the reaction an N-acylsphing-4-enine + H2O = sphing-4-enine + a fatty acid. Hydrolyzes the sphingolipid ceramide into sphingosine and free fatty acid. Promotes oxidative stress resistance. This Arabidopsis thaliana (Mouse-ear cress) protein is Neutral ceramidase 3.